The following is a 158-amino-acid chain: Interleukin-17A (158 aa).

Residues 1 to 25 form the signal peptide; sequence MSPGRASSVSLMLLLLLSLAATVKA. The N-linked (GlcNAc...) asparagine glycan is linked to N71. Disulfide bonds link C97–C147 and C102–C149.

It belongs to the IL-17 family. In terms of assembly, homodimer. Forms complexes with IL17RA and IL17RC receptors with 2:1 binding stoichiometry: two receptor chains for one interleukin molecule. IL17A homodimer preferentially drives the formation of IL17RA-IL17RC heterodimeric receptor complex. IL17A homodimer adopts an asymmetrical ternary structure with one IL17RA molecule, allowing for high affinity interactions of one IL17A monomer with one IL17RA molecule (via D1 and D2 domains), while disfavoring binding of a second IL17RA molecule on the other IL17A monomer. Heterodimer with IL17F. IL17A-IL17F forms complexes with IL17RA-IL17RC, but with lower affinity when compared to IL17A homodimer. IL17RA and IL17RC chains cannot distinguish between IL17A and IL17F molecules, potentially enabling the formation of topologically distinct complexes. Expressed by Th17 cell lineage (at protein level). The expression pattern reflects the differentiation state, with IL17A-IL17F heterodimers produced at higher levels than IL17A-IL17A and IL17F-IL17F dimers in fully differentiated Th17 cells. Expressed in innate lymphoid cells (at protein level). Expressed in gamma-delta T cell subsets (at protein level). Expressed in iNKT cells (at protein level).

It localises to the secreted. Its function is as follows. Effector cytokine of innate and adaptive immune system involved in antimicrobial host defense and maintenance of tissue integrity. Signals via IL17RA-IL17RC heterodimeric receptor complex, triggering homotypic interaction of IL17RA and IL17RC chains with TRAF3IP2 adapter. This leads to downstream TRAF6-mediated activation of NF-kappa-B and MAPkinase pathways ultimately resulting in transcriptional activation of cytokines, chemokines, antimicrobial peptides and matrix metalloproteinases, with potential strong immune inflammation. Plays an important role in connecting T cell-mediated adaptive immunity and acute inflammatory response to destroy extracellular bacteria and fungi. As a signature effector cytokine of T-helper 17 cells (Th17), primarily induces neutrophil activation and recruitment at infection and inflammatory sites. In airway epithelium, mediates neutrophil chemotaxis via induction of CXCL1 and CXCL5 chemokines. In secondary lymphoid organs, contributes to germinal center formation by regulating the chemotactic response of B cells to CXCL12 and CXCL13, enhancing retention of B cells within the germinal centers, B cell somatic hypermutation rate and selection toward plasma cells. Effector cytokine of a subset of gamma-delta T cells that functions as part of an inflammatory circuit downstream IL1B, TLR2 and IL23A-IL12B to promote neutrophil recruitment for efficient bacterial clearance. Effector cytokine of innate immune cells including invariant natural killer cell (iNKT) and group 3 innate lymphoid cells that mediate initial neutrophilic inflammation. Involved in the maintenance of the integrity of epithelial barriers during homeostasis and pathogen infection. Upon acute injury, has a direct role in epithelial barrier formation by regulating OCLN localization and tight junction biogenesis. As part of the mucosal immune response induced by commensal bacteria, enhances host's ability to resist pathogenic bacterial and fungal infections by promoting neutrophil recruitment and antimicrobial peptides release. In synergy with IL17F, mediates the production of antimicrobial beta-defensins DEFB1, DEFB103A, and DEFB104A by mucosal epithelial cells, limiting the entry of microbes through the epithelial barriers. Involved in antiviral host defense through various mechanisms. Enhances immunity against West Nile virus by promoting T cell cytotoxicity. May play a beneficial role in influenza A virus (H5N1) infection by enhancing B cell recruitment and immune response in the lung. Contributes to influenza A virus (H1N1) clearance by driving the differentiation of B-1a B cells, providing for production of virus-specific IgM antibodies at first line of host defense. The chain is Interleukin-17A (Il17a) from Mus musculus (Mouse).